The chain runs to 192 residues: Ribonuclease HII (192 aa).

The RNase H type-2 domain maps to 2 to 187 (KNLCGIDEAG…KALGENEIGV (186 aa)). A divalent metal cation-binding residues include Asp-8, Glu-9, and Asp-97.

It belongs to the RNase HII family. It depends on Mn(2+) as a cofactor. The cofactor is Mg(2+).

It is found in the cytoplasm. The enzyme catalyses Endonucleolytic cleavage to 5'-phosphomonoester.. Functionally, endonuclease that specifically degrades the RNA of RNA-DNA hybrids. This is Ribonuclease HII from Aliarcobacter butzleri (strain RM4018) (Arcobacter butzleri).